The chain runs to 284 residues: MVLMIVSGRSGSGKSVALRALEDMGFYCVDNLPVVLLPDLARTLADRQISAAVSIDVRNMPESPEIFEQAMNNLPDAFSPQLLFLDADRNTLIRRYSDTRRLHPLSSKNLSLESAIDQESDLLEPLRSRADLIVDTSEMSVHELAEMLRTRLLGKRERELTMVFESFGFKHGIPIDADYVFDVRFLPNPHWDPKLRPMTGLDKPVAAFLDRHTEVHNFIYQTRSYLELWLPMLETNNRSYLTVAIGCTGGKHRSVYIAEQLADYFRSRGKNVQSRHRTLEKRKT.

An ATP-binding site is contributed by Gly-8–Ser-15. Residue Asp-56–Asn-59 participates in GTP binding. The tract at residues Arg-266–Thr-284 is RNA-binding.

The protein belongs to the RapZ-like family. RapZ subfamily. Homotrimer.

Functionally, modulates the synthesis of GlmS, by affecting the processing and stability of the regulatory small RNA GlmZ. When glucosamine-6-phosphate (GlcN6P) concentrations are high in the cell, RapZ binds GlmZ and targets it to cleavage by RNase E. Consequently, GlmZ is inactivated and unable to activate GlmS synthesis. Under low GlcN6P concentrations, RapZ is sequestered and inactivated by an other regulatory small RNA, GlmY, preventing GlmZ degradation and leading to synthesis of GlmS. This chain is RNase adapter protein RapZ, found in Citrobacter koseri (strain ATCC BAA-895 / CDC 4225-83 / SGSC4696).